The following is a 137-amino-acid chain: Basic phospholipase A2 homolog W6D49 (137 aa).

The N-terminal stretch at Met-1–Gly-16 is a signal peptide. 7 disulfides stabilise this stretch: Cys-42-Cys-131, Cys-44-Cys-60, Cys-59-Cys-111, Cys-65-Cys-137, Cys-66-Cys-104, Cys-73-Cys-97, and Cys-91-Cys-102. The segment at Lys-121 to Lys-133 is important for membrane-damaging activities in eukaryotes and bacteria; heparin-binding.

Monomer. Expressed by the venom gland.

It localises to the secreted. Heparin reduces its edema-inducing activity. In terms of biological role, snake venom phospholipase A2 homolog that lacks enzymatic activity. Shows myotoxin activities and displays edema-inducing activities. A model of myotoxic mechanism has been proposed: an apo Lys49-PLA2 is activated by the entrance of a hydrophobic molecule (e.g. fatty acid) at the hydrophobic channel of the protein leading to a reorientation of a monomer. This reorientation causes a transition between 'inactive' to 'active' states, causing alignment of C-terminal and membrane-docking sites (MDoS) side-by-side and putting the membrane-disruption sites (MDiS) in the same plane, exposed to solvent and in a symmetric position for both monomers. The MDoS region stabilizes the toxin on membrane by the interaction of charged residues with phospholipid head groups. Subsequently, the MDiS region destabilizes the membrane with penetration of hydrophobic residues. This insertion causes a disorganization of the membrane, allowing an uncontrolled influx of ions (i.e. calcium and sodium), and eventually triggering irreversible intracellular alterations and cell death. The protein is Basic phospholipase A2 homolog W6D49 of Calloselasma rhodostoma (Malayan pit viper).